Here is a 185-residue protein sequence, read N- to C-terminus: Large ribosomal subunit protein uL5 (185 aa).

The protein belongs to the universal ribosomal protein uL5 family. In terms of assembly, part of the 50S ribosomal subunit; part of the 5S rRNA/L5/L18/L25 subcomplex. Contacts the 5S rRNA and the P site tRNA. Forms a bridge to the 30S subunit in the 70S ribosome.

Functionally, this is one of the proteins that bind and probably mediate the attachment of the 5S RNA into the large ribosomal subunit, where it forms part of the central protuberance. In the 70S ribosome it contacts protein S13 of the 30S subunit (bridge B1b), connecting the 2 subunits; this bridge is implicated in subunit movement. Contacts the P site tRNA; the 5S rRNA and some of its associated proteins might help stabilize positioning of ribosome-bound tRNAs. This is Large ribosomal subunit protein uL5 from Streptomyces avermitilis (strain ATCC 31267 / DSM 46492 / JCM 5070 / NBRC 14893 / NCIMB 12804 / NRRL 8165 / MA-4680).